A 178-amino-acid polypeptide reads, in one-letter code: Neuroblastoma suppressor of tumorigenicity 1 (178 aa).

An N-terminal signal peptide occupies residues 1–16 (MLWVLVGTVLPVMLLA). 5 disulfide bridges follow: C34–C84, C48–C98, C58–C117, C62–C119, and C81–C122. One can recognise a CTCK domain in the interval 34 to 123 (CEAKNITQIV…IVHCSCQACG (90 aa)). Residues 130-178 (GLNVYMQGEDGPGSQPGSHSHSHPHPGCQTPEPEEPPGAPQVEEEGAED) form a disordered region.

Belongs to the DAN family. In terms of assembly, homodimer. In terms of tissue distribution, most abundant in lung, brain, intestine and kidney.

The protein localises to the secreted. In terms of biological role, possible candidate as a tumor suppressor gene of neuroblastoma. May play an important role in preventing cells from entering the final stage (G1/S) of the transformation process. This chain is Neuroblastoma suppressor of tumorigenicity 1 (Nbl1), found in Rattus norvegicus (Rat).